Reading from the N-terminus, the 730-residue chain is Polyphosphate kinase (730 aa).

Positions 1–21 (MMRHDRNVTEIDAETRPDENL) are enriched in basic and acidic residues. Residues 1-39 (MMRHDRNVTEIDAETRPDENLWHSGDSAVGAPPAATPAA) form a disordered region. ATP is bound at residue asparagine 86. Arginine 423 and arginine 453 together coordinate Mg(2+). The active-site Phosphohistidine intermediate is histidine 483. Positions 516, 612, and 640 each coordinate ATP.

The protein belongs to the polyphosphate kinase 1 (PPK1) family. Requires Mg(2+) as cofactor. Post-translationally, an intermediate of this reaction is the autophosphorylated ppk in which a phosphate is covalently linked to a histidine residue through a N-P bond.

The enzyme catalyses [phosphate](n) + ATP = [phosphate](n+1) + ADP. Functionally, catalyzes the reversible transfer of the terminal phosphate of ATP to form a long-chain polyphosphate (polyP). This is Polyphosphate kinase from Mycobacterium avium (strain 104).